Here is a 210-residue protein sequence, read N- to C-terminus: Type III pantothenate kinase (210 aa).

5–12 provides a ligand contact to ATP; it reads DIGNTYLH. Residues Y69 and 73-76 contribute to the substrate site; that span reads GVDR. D75 acts as the Proton acceptor in catalysis. D90 is a binding site for K(+). ATP is bound at residue S93. Position 145 (T145) interacts with substrate.

It belongs to the type III pantothenate kinase family. Homodimer. It depends on NH4(+) as a cofactor. Requires K(+) as cofactor.

It is found in the cytoplasm. It carries out the reaction (R)-pantothenate + ATP = (R)-4'-phosphopantothenate + ADP + H(+). It functions in the pathway cofactor biosynthesis; coenzyme A biosynthesis; CoA from (R)-pantothenate: step 1/5. Its function is as follows. Catalyzes the phosphorylation of pantothenate (Pan), the first step in CoA biosynthesis. The polypeptide is Type III pantothenate kinase (Wolinella succinogenes (strain ATCC 29543 / DSM 1740 / CCUG 13145 / JCM 31913 / LMG 7466 / NCTC 11488 / FDC 602W) (Vibrio succinogenes)).